The chain runs to 932 residues: Glycine dehydrogenase (decarboxylating) (932 aa).

Lys685 carries the post-translational modification N6-(pyridoxal phosphate)lysine.

It belongs to the GcvP family. As to quaternary structure, the glycine cleavage system is composed of four proteins: P, T, L and H. Pyridoxal 5'-phosphate is required as a cofactor.

It catalyses the reaction N(6)-[(R)-lipoyl]-L-lysyl-[glycine-cleavage complex H protein] + glycine + H(+) = N(6)-[(R)-S(8)-aminomethyldihydrolipoyl]-L-lysyl-[glycine-cleavage complex H protein] + CO2. Functionally, the glycine cleavage system catalyzes the degradation of glycine. The P protein binds the alpha-amino group of glycine through its pyridoxal phosphate cofactor; CO(2) is released and the remaining methylamine moiety is then transferred to the lipoamide cofactor of the H protein. The polypeptide is Glycine dehydrogenase (decarboxylating) (Brucella abortus (strain S19)).